The primary structure comprises 814 residues: Echinoderm microtubule-associated protein-like 1 (814 aa).

Residues 31–72 are a coiled coil; that stretch reads SMEISDRIASLEQRVQMQEDDIQLLKSALADVVRRLNITEEQ. The tract at residues 77–185 is disordered; the sequence is NRKGPTKARP…EPTFSPEEGY (109 aa). The span at 92–101 shows a compositional bias: polar residues; it reads PLRTTVNNGT. Positions 103–115 are enriched in low complexity; it reads LPKKPSASLPSPS. Serine 113 carries the post-translational modification Phosphoserine. A compositionally biased stretch (polar residues) spans 127 to 137; it reads KSINRTSSSER. A compositionally biased stretch (basic and acidic residues) spans 142–152; that stretch reads GRRESSGDSKG. Residues 155-167 are compositionally biased toward low complexity; sequence NRTGSTSSSSSGK. The tandem atypical propeller in EMLs stretch occupies residues 175 to 814; sequence KEPTFSPEEG…DTSIMQWRVI (640 aa). 12 WD repeats span residues 260-309, 314-357, 362-399, 408-445, 449-488, 492-529, 534-571, 577-612, 616-654, 663-700, 708-767, and 774-813; these read EQLQ…IWDS, TLHV…VWDW, RLAD…FWTL, QGLF…VWGK, RISY…SWNG, KLHK…LQGT, FTPI…LWDA, VWDK…VFDT, DLVT…IYGV, RVGK…YWVP, SVET…LFSY, and APSH…QWRV.

It belongs to the WD repeat EMAP family. As to quaternary structure, homotrimer; self-association is mediated by the N-terminal coiled coil. Does not interact with EML3. Binds repolymerizing microtubules. Binds unpolymerized tubulins via its WD repeat region. Interacts with TASOR.

The protein resides in the cytoplasm. The protein localises to the perinuclear region. Its subcellular location is the cytoskeleton. Its function is as follows. Modulates the assembly and organization of the microtubule cytoskeleton, and probably plays a role in regulating the orientation of the mitotic spindle and the orientation of the plane of cell division. Required for normal proliferation of neuronal progenitor cells in the developing brain and for normal brain development. Does not affect neuron migration per se. The chain is Echinoderm microtubule-associated protein-like 1 (Eml1) from Rattus norvegicus (Rat).